The chain runs to 769 residues: Probable beta-glucosidase M (769 aa).

Positions 1 to 22 (MHSNLGLAGLAGLLATASVCLS) are cleaved as a signal peptide. Asn28, Asn75, and Asn262 each carry an N-linked (GlcNAc...) asparagine glycan. Asp290 is a catalytic residue. N-linked (GlcNAc...) asparagine glycosylation is found at Asn318, Asn325, Asn437, and Asn546.

Belongs to the glycosyl hydrolase 3 family.

It is found in the secreted. It carries out the reaction Hydrolysis of terminal, non-reducing beta-D-glucosyl residues with release of beta-D-glucose.. It functions in the pathway glycan metabolism; cellulose degradation. Functionally, beta-glucosidases are one of a number of cellulolytic enzymes involved in the degradation of cellulosic biomass. Catalyzes the last step releasing glucose from the inhibitory cellobiose. In Neosartorya fischeri (strain ATCC 1020 / DSM 3700 / CBS 544.65 / FGSC A1164 / JCM 1740 / NRRL 181 / WB 181) (Aspergillus fischerianus), this protein is Probable beta-glucosidase M (bglM).